A 257-amino-acid polypeptide reads, in one-letter code: uncharacterized protein (257 aa).

The helical transmembrane segment at 6 to 26 threads the bilayer; that stretch reads IFWLNLAAIIIISIVVSGGMF.

Belongs to the staphylococcal tandem lipoprotein family.

Its subcellular location is the cell membrane. This is an uncharacterized protein from Staphylococcus aureus (strain N315).